A 198-amino-acid chain; its full sequence is Adenylate kinase (198 aa).

10-15 is a binding site for ATP; sequence GAGKGT. Residues 30 to 59 are NMP; it reads STGDMLRAAVQAGSEVGKRAKAVMDAGELV. Residues Thr31, Arg36, 57 to 59, 85 to 88, and Gln92 each bind AMP; these read ELV and GYPR. Residues 126 to 142 form an LID region; sequence KRAEDAKAAGQPVRKDD. Arg127 contributes to the ATP binding site. Positions 139 and 150 each coordinate AMP. Ala178 lines the ATP pocket.

This sequence belongs to the adenylate kinase family. In terms of assembly, monomer.

The protein localises to the cytoplasm. It carries out the reaction AMP + ATP = 2 ADP. It functions in the pathway purine metabolism; AMP biosynthesis via salvage pathway; AMP from ADP: step 1/1. Catalyzes the reversible transfer of the terminal phosphate group between ATP and AMP. Plays an important role in cellular energy homeostasis and in adenine nucleotide metabolism. The sequence is that of Adenylate kinase from Mesorhizobium japonicum (strain LMG 29417 / CECT 9101 / MAFF 303099) (Mesorhizobium loti (strain MAFF 303099)).